Consider the following 788-residue polypeptide: Ribosome biogenesis protein ERB1 (788 aa).

The interval M1–P91 is disordered. Residues L38–D50 show a composition bias toward basic and acidic residues. The segment covering S51–S78 has biased composition (acidic residues). Positions I80 to P91 are enriched in basic and acidic residues. WD repeat units follow at residues G433–S472, S476–E516, K613–I651, P654–K699, Y703–S742, and T758–T788.

This sequence belongs to the WD repeat BOP1/ERB1 family. In terms of assembly, component of the NOP7 complex, composed of ERB1, NOP7 and YTM1. The complex is held together by ERB1, which interacts with NOP7 via its N-terminal domain and with YTM1 via a high-affinity interaction between the seven-bladed beta-propeller domains of the 2 proteins. The NOP7 complex associates with the 66S pre-ribosome.

Its subcellular location is the nucleus. It is found in the nucleolus. The protein resides in the nucleoplasm. Its function is as follows. Component of the NOP7 complex, which is required for maturation of the 25S and 5.8S ribosomal RNAs and formation of the 60S ribosome. This Ajellomyces capsulatus (strain NAm1 / WU24) (Darling's disease fungus) protein is Ribosome biogenesis protein ERB1.